The sequence spans 690 residues: Calpain-9 (690 aa).

Residues 1 to 24 (MPYLHRSLRPQPQPVPRDARTVHS) are disordered. The Calpain catalytic domain maps to 42 to 337 (LFEDADFPAS…FDKVEICNLT (296 aa)). Ca(2+)-binding residues include L81, G83, and D88. C97 is an active-site residue. E167 provides a ligand contact to Ca(2+). Residues H254 and N278 contribute to the active site. Residues E284, D291, L312, D314, and E316 each contribute to the Ca(2+) site. The segment at 338 to 521 (PDALEDNTLH…PQEEETEEER (184 aa)) is domain III. A domain IV region spans residues 522 to 690 (QFRALFRRIA…NEFINLTMNI (169 aa)). EF-hand domains follow at residues 534-552 (DMEVSAEELEYVLNAVLQK), 561-589 (LSLLSCRNIISLMDTSGNGKMEFEEFRVF), and 591-626 (DKLRYWMDLFLQFDVDKSGTMSSYELRTALKAAGFQ). Ca(2+) contacts are provided by D574, S576, N578, K580, E585, D604, D606, S608, T610, and E615.

This sequence belongs to the peptidase C2 family. Predominantly expressed in stomach and small intestine, although low levels of expression in other organs.

Functionally, calcium-regulated non-lysosomal thiol-protease. The polypeptide is Calpain-9 (Capn9) (Rattus norvegicus (Rat)).